A 213-amino-acid chain; its full sequence is Peptidyl-tRNA hydrolase (213 aa).

Tyrosine 15 is a tRNA binding site. Catalysis depends on histidine 20, which acts as the Proton acceptor. TRNA contacts are provided by tyrosine 66, asparagine 68, and asparagine 114. The interval methionine 186 to alanine 213 is disordered. The span at proline 196–alanine 213 shows a compositional bias: pro residues.

It belongs to the PTH family. As to quaternary structure, monomer.

The protein localises to the cytoplasm. It carries out the reaction an N-acyl-L-alpha-aminoacyl-tRNA + H2O = an N-acyl-L-amino acid + a tRNA + H(+). Hydrolyzes ribosome-free peptidyl-tRNAs (with 1 or more amino acids incorporated), which drop off the ribosome during protein synthesis, or as a result of ribosome stalling. Its function is as follows. Catalyzes the release of premature peptidyl moieties from peptidyl-tRNA molecules trapped in stalled 50S ribosomal subunits, and thus maintains levels of free tRNAs and 50S ribosomes. In Leptothrix cholodnii (strain ATCC 51168 / LMG 8142 / SP-6) (Leptothrix discophora (strain SP-6)), this protein is Peptidyl-tRNA hydrolase.